Here is a 315-residue protein sequence, read N- to C-terminus: Neuroguidin (315 aa).

A2 bears the N-acetylalanine mark. Positions 5-42 (EVLESDLPNAVALLKNLQEQVMAVTAQVQTLTKKVQAK) form a coiled coil. The necessary for interaction with EIF4E stretch occupies residues 41 to 174 (AKAYPTEKGL…KGTAKKYVPP (134 aa)). Phosphoserine occurs at positions 121, 142, and 143. A disordered region spans residues 123 to 174 (SENDPLRFKPHPSNMMSKLSSEDEEEDEAEEGQSGASGKKSGKGTAKKYVPP). Acidic residues predominate over residues 144–153 (EDEEEDEAEE). The stretch at 181-205 (YDETEAEREKKRLERAKRRALSSSV) forms a coiled coil. A phosphoserine mark is found at S204 and S214. The tract at residues 252–315 (SKREKGRRKR…RKKKGFRRRR (64 aa)) is disordered. Positions 264–276 (VMSSQLHSLTHFS) are enriched in polar residues. Residues 295-315 (TKKRKKIPKKGRKKKGFRRRR) show a composition bias toward basic residues.

Belongs to the SAS10 family. In terms of assembly, part of the small subunit (SSU) processome, composed of more than 70 proteins and the RNA chaperone small nucleolar RNA (snoRNA) U3. Interacts with CPEB1 and EIF4E.

It localises to the nucleus. The protein localises to the nucleolus. Its subcellular location is the chromosome. The protein resides in the centromere. It is found in the cytoplasm. It localises to the cell projection. The protein localises to the axon. Its subcellular location is the dendrite. The protein resides in the filopodium. Part of the small subunit (SSU) processome, first precursor of the small eukaryotic ribosomal subunit. During the assembly of the SSU processome in the nucleolus, many ribosome biogenesis factors, an RNA chaperone and ribosomal proteins associate with the nascent pre-rRNA and work in concert to generate RNA folding, modifications, rearrangements and cleavage as well as targeted degradation of pre-ribosomal RNA by the RNA exosome. Its dissociation from the complex determines the transition from state pre-A1 to state pre-A1*. Inhibits mRNA translation in a cytoplasmic polyadenylation element (CPE)-dependent manner. The chain is Neuroguidin (NGDN) from Bos taurus (Bovine).